A 75-amino-acid polypeptide reads, in one-letter code: Putative antitoxin VapB17 (75 aa).

Functionally, putative antitoxin component of a possible type II toxin-antitoxin (TA) system. The cognate toxin is VapC17. This Mycobacterium tuberculosis (strain CDC 1551 / Oshkosh) protein is Putative antitoxin VapB17 (vapB17).